Consider the following 428-residue polypeptide: Adenylosuccinate synthetase (428 aa).

GTP-binding positions include 12 to 18 (GDEGKGK) and 40 to 42 (GHT). The active-site Proton acceptor is the Asp-13. Mg(2+) contacts are provided by Asp-13 and Gly-40. IMP-binding positions include 13-16 (DEGK), 38-41 (NAGH), Thr-128, Arg-142, Gln-223, Thr-238, and Arg-302. The active-site Proton donor is the His-41. Residue 298-304 (VTTGRPR) coordinates substrate. Residues Arg-304, 330-332 (KLD), and 412-414 (GTG) contribute to the GTP site.

The protein belongs to the adenylosuccinate synthetase family. As to quaternary structure, homodimer. The cofactor is Mg(2+).

It is found in the cytoplasm. The enzyme catalyses IMP + L-aspartate + GTP = N(6)-(1,2-dicarboxyethyl)-AMP + GDP + phosphate + 2 H(+). Its pathway is purine metabolism; AMP biosynthesis via de novo pathway; AMP from IMP: step 1/2. In terms of biological role, plays an important role in the de novo pathway of purine nucleotide biosynthesis. Catalyzes the first committed step in the biosynthesis of AMP from IMP. The polypeptide is Adenylosuccinate synthetase (Bifidobacterium adolescentis (strain ATCC 15703 / DSM 20083 / NCTC 11814 / E194a)).